The following is a 290-amino-acid chain: ATP synthase gamma chain (290 aa).

The protein belongs to the ATPase gamma chain family. In terms of assembly, F-type ATPases have 2 components, CF(1) - the catalytic core - and CF(0) - the membrane proton channel. CF(1) has five subunits: alpha(3), beta(3), gamma(1), delta(1), epsilon(1). CF(0) has three main subunits: a, b and c.

The protein localises to the cell membrane. Functionally, produces ATP from ADP in the presence of a proton gradient across the membrane. The gamma chain is believed to be important in regulating ATPase activity and the flow of protons through the CF(0) complex. This chain is ATP synthase gamma chain, found in Listeria welshimeri serovar 6b (strain ATCC 35897 / DSM 20650 / CCUG 15529 / CIP 8149 / NCTC 11857 / SLCC 5334 / V8).